The following is a 739-amino-acid chain: Phosphoribosylformylglycinamidine synthase subunit PurL (739 aa).

Residue His-54 is part of the active site. ATP is bound by residues Tyr-57 and Lys-96. Glu-98 is a binding site for Mg(2+). Residues 99 to 102 (SHNH) and Arg-121 each bind substrate. Residue His-100 is the Proton acceptor of the active site. Position 122 (Asp-122) interacts with Mg(2+). Gln-245 is a binding site for substrate. Residue Asp-273 participates in Mg(2+) binding. Residue 317 to 319 (ESQ) coordinates substrate. ATP is bound by residues Asp-500 and Gly-537. Asn-538 serves as a coordination point for Mg(2+). Ser-540 is a binding site for substrate.

This sequence belongs to the FGAMS family. As to quaternary structure, monomer. Part of the FGAM synthase complex composed of 1 PurL, 1 PurQ and 2 PurS subunits.

It localises to the cytoplasm. The catalysed reaction is N(2)-formyl-N(1)-(5-phospho-beta-D-ribosyl)glycinamide + L-glutamine + ATP + H2O = 2-formamido-N(1)-(5-O-phospho-beta-D-ribosyl)acetamidine + L-glutamate + ADP + phosphate + H(+). The protein operates within purine metabolism; IMP biosynthesis via de novo pathway; 5-amino-1-(5-phospho-D-ribosyl)imidazole from N(2)-formyl-N(1)-(5-phospho-D-ribosyl)glycinamide: step 1/2. Part of the phosphoribosylformylglycinamidine synthase complex involved in the purines biosynthetic pathway. Catalyzes the ATP-dependent conversion of formylglycinamide ribonucleotide (FGAR) and glutamine to yield formylglycinamidine ribonucleotide (FGAM) and glutamate. The FGAM synthase complex is composed of three subunits. PurQ produces an ammonia molecule by converting glutamine to glutamate. PurL transfers the ammonia molecule to FGAR to form FGAM in an ATP-dependent manner. PurS interacts with PurQ and PurL and is thought to assist in the transfer of the ammonia molecule from PurQ to PurL. This chain is Phosphoribosylformylglycinamidine synthase subunit PurL, found in Bacillus mycoides (strain KBAB4) (Bacillus weihenstephanensis).